Reading from the N-terminus, the 787-residue chain is Exocyst complex component SEC15B (787 aa).

It belongs to the SEC15 family. In terms of assembly, the exocyst complex is composed of SEC3, SEC5, SEC6, SEC8, SEC10, EXO70A1 and EXO84B. Interacts with EXO84B. Binds to EXO70H1 AND EXO70B2. Binds directly to B1L.

The protein localises to the cytoplasm. Its subcellular location is the cytosol. The protein resides in the cytoskeleton. It localises to the phragmoplast. It is found in the secreted. The protein localises to the cell wall. Its subcellular location is the extracellular exosome. Component of the exocyst complex involved in the docking of exocytic vesicles with fusion sites on the plasma membrane during regulated or polarized secretion. Involved in polarized cell growth and organ morphogenesis. During cytokinesis, involved in cell plate initiation, cell plate maturation and formation of new primary cell wall. This Arabidopsis thaliana (Mouse-ear cress) protein is Exocyst complex component SEC15B.